The primary structure comprises 102 residues: Co-chaperonin GroES (102 aa).

This sequence belongs to the GroES chaperonin family. Heptamer of 7 subunits arranged in a ring. Interacts with the chaperonin GroEL.

The protein localises to the cytoplasm. Functionally, together with the chaperonin GroEL, plays an essential role in assisting protein folding. The GroEL-GroES system forms a nano-cage that allows encapsulation of the non-native substrate proteins and provides a physical environment optimized to promote and accelerate protein folding. GroES binds to the apical surface of the GroEL ring, thereby capping the opening of the GroEL channel. The protein is Co-chaperonin GroES of Chlamydia trachomatis serovar L2 (strain ATCC VR-902B / DSM 19102 / 434/Bu).